The following is a 111-amino-acid chain: Nucleoid-associated protein Cpha266_1171 (111 aa).

Belongs to the YbaB/EbfC family. As to quaternary structure, homodimer.

The protein localises to the cytoplasm. It localises to the nucleoid. Binds to DNA and alters its conformation. May be involved in regulation of gene expression, nucleoid organization and DNA protection. This Chlorobium phaeobacteroides (strain DSM 266 / SMG 266 / 2430) protein is Nucleoid-associated protein Cpha266_1171.